The primary structure comprises 286 residues: Alpha-ketoglutarate-dependent dioxygenase alkB homolog 3 (286 aa).

The interval Met1–Glu46 is disordered. Over residues Pro17–Ala38 the composition is skewed to polar residues. Residues Trp115 and Tyr141–Tyr143 contribute to the substrate site. Residues Thr172 to Tyr278 enclose the Fe2OG dioxygenase domain. Leu177 carries the (4R)-5-hydroxyleucine; alternate modification. Position 177 is a (4R)-5-oxoleucine; alternate (Leu177). Asn179 to Tyr181 is a 2-oxoglutarate binding site. Positions 191 and 193 each coordinate Fe cation. Residue Asp194 coordinates substrate. Fe cation is bound at residue His257. 2-oxoglutarate is bound by residues Arg269–Arg275 and Arg275.

It belongs to the alkB family. In terms of assembly, interacts with the ASCC complex composed of ASCC1, ASCC2 and ASCC3. Interacts directly with ASCC3, and is thereby recruited to the ASCC complex. Interacts with OTUD4; the interaction is direct. Interacts with USP7 and USP9X. Fe(2+) serves as cofactor. Post-translationally, ubiquitinated; undergoes 'Lys-48'-linked polyubiquitination. OTUD4 promotes USP7 and USP9X-dependent deubiquitination of 'Lys-48'-polyubiquitinated ALKBH3 promoting the repair of alkylated DNA lesions. In terms of tissue distribution, detected in testis, kidney, liver and heart.

The protein localises to the nucleus. It is found in the cytoplasm. It carries out the reaction an N(1)-methyladenosine in mRNA + 2-oxoglutarate + O2 = an adenosine in mRNA + formaldehyde + succinate + CO2. The enzyme catalyses a methylated nucleobase within DNA + 2-oxoglutarate + O2 = a nucleobase within DNA + formaldehyde + succinate + CO2. The catalysed reaction is an N(1)-methyl-2'-deoxyadenosine in single-stranded DNA + 2-oxoglutarate + O2 = a 2'-deoxyadenosine in single-stranded DNA + formaldehyde + succinate + CO2 + H(+). It catalyses the reaction an N(3)-methyl-2'-deoxycytidine in single-stranded DNA + 2-oxoglutarate + O2 = a 2'-deoxycytidine in single-stranded DNA + formaldehyde + succinate + CO2 + H(+). It carries out the reaction a 3,N(4)-etheno-2'-deoxycytidine in single-stranded DNA + 2-oxoglutarate + O2 + H2O = a 2'-deoxycytidine in single-stranded DNA + glyoxal + succinate + CO2. With respect to regulation, activated by ascorbate. In terms of biological role, dioxygenase that mediates demethylation of DNA and RNA containing 1-methyladenosine (m1A). Repairs alkylated DNA containing 1-methyladenosine (m1A) and 3-methylcytosine (m3C) by oxidative demethylation. Has a strong preference for single-stranded DNA. Able to process alkylated m3C within double-stranded regions via its interaction with ASCC3, which promotes DNA unwinding to generate single-stranded substrate needed for ALKBH3. Can repair exocyclic 3,N4-ethenocytosine adducs in single-stranded DNA. Also acts on RNA. Demethylates N(1)-methyladenosine (m1A) RNA, an epigenetic internal modification of messenger RNAs (mRNAs) highly enriched within 5'-untranslated regions (UTRs) and in the vicinity of start codons. Requires molecular oxygen, alpha-ketoglutarate and iron. The chain is Alpha-ketoglutarate-dependent dioxygenase alkB homolog 3 from Mus musculus (Mouse).